The primary structure comprises 514 residues: Steroid 17-alpha-hydroxylase/17,20 lyase (514 aa).

Position 445 (cysteine 445) interacts with heme.

This sequence belongs to the cytochrome P450 family. Requires heme as cofactor.

Its subcellular location is the membrane. The enzyme catalyses a C21-steroid + reduced [NADPH--hemoprotein reductase] + O2 = a 17alpha-hydroxy-C21-steroid + oxidized [NADPH--hemoprotein reductase] + H2O + H(+). The catalysed reaction is 17alpha-hydroxyprogesterone + reduced [NADPH--hemoprotein reductase] + O2 = androst-4-ene-3,17-dione + acetate + oxidized [NADPH--hemoprotein reductase] + H2O + 2 H(+). It carries out the reaction 17alpha-hydroxypregnenolone + reduced [NADPH--hemoprotein reductase] + O2 = 3beta-hydroxyandrost-5-en-17-one + acetate + oxidized [NADPH--hemoprotein reductase] + H2O + 2 H(+). The protein operates within lipid metabolism; steroid biosynthesis. Functionally, conversion of pregnenolone and progesterone to their 17-alpha-hydroxylated products and subsequently to dehydroepiandrosterone (DHEA) and androstenedione. Catalyzes both the 17-alpha-hydroxylation and the 17,20-lyase reaction. This is Steroid 17-alpha-hydroxylase/17,20 lyase (cyp17a1) from Ictalurus punctatus (Channel catfish).